The sequence spans 160 residues: Protransforming growth factor alpha (160 aa).

The N-terminal stretch at 1-23 (MVPSAGQLALFALGIVLAACQAL) is a signal peptide. The propeptide at 24–39 (ENSTSPLSADPPVAAA) is removed in mature form. The Extracellular segment spans residues 24-98 (ENSTSPLSAD…AVVAASQKKQ (75 aa)). N-linked (GlcNAc...) asparagine glycosylation is present at Asn-25. The region spanning 43-83 (HFNDCPDSHTQFCFHGTCRFLVQEDKPACVCHSGYVGARCE) is the EGF-like domain. 3 disulfides stabilise this stretch: Cys-47–Cys-60, Cys-55–Cys-71, and Cys-73–Cys-82. Residues 90-160 (VVAASQKKQA…TACCHSETVV (71 aa)) constitute a propeptide, removed in mature form. Residues 99 to 124 (AITALVVVSIVALAVLIITCVLIHCC) traverse the membrane as a helical segment. The Cytoplasmic portion of the chain corresponds to 125–160 (QVRKHCEWCRALICRHEKPSALLKGRTACCHSETVV). Residues Cys-153 and Cys-154 are each lipidated (S-palmitoyl cysteine).

Interacts with the PDZ domains of MAGI3, SDCBP and SNTA1. The interaction with SDCBP, is required for the targeting to the cell surface. In the endoplasmic reticulum, in its immature form (i.e. with a prosegment and lacking full N-glycosylation), interacts with CNIH. In the Golgi apparatus, may form a complex with CNIH and GORASP2. Interacts (via cytoplasmic C-terminal domain) with NKD2. In terms of tissue distribution, isoform 1, isoform 3 and isoform 4 are expressed in keratinocytes and tumor-derived cell lines.

The protein localises to the secreted. It is found in the extracellular space. It localises to the cell membrane. TGF alpha is a mitogenic polypeptide that is able to bind to the EGF receptor/EGFR and to act synergistically with TGF beta to promote anchorage-independent cell proliferation in soft agar. The polypeptide is Protransforming growth factor alpha (TGFA) (Homo sapiens (Human)).